We begin with the raw amino-acid sequence, 493 residues long: Ectonucleoside triphosphate diphosphohydrolase 8 (493 aa).

The Cytoplasmic segment spans residues M1–V7. The chain crosses the membrane as a helical span at residues V8–V28. Residues D29–P463 lie on the Extracellular side of the membrane. N65, N79, and N133 each carry an N-linked (GlcNAc...) asparagine glycan. C76 and C100 are oxidised to a cystine. Catalysis depends on E166, which acts as the Proton acceptor. N223, N234, N267, N324, N330, N361, N372, N382, and N445 each carry an N-linked (GlcNAc...) asparagine glycan. Cysteines 244 and 291 form a disulfide. A disulfide bond links C327 and C333. Cysteines 379 and 401 form a disulfide. A helical membrane pass occupies residues S464–L486. At Q487 to K493 the chain is on the cytoplasmic side.

It belongs to the GDA1/CD39 NTPase family. Ca(2+) serves as cofactor. The cofactor is Mg(2+). In terms of processing, N-glycosylated.

It localises to the cell membrane. It catalyses the reaction a ribonucleoside 5'-triphosphate + 2 H2O = a ribonucleoside 5'-phosphate + 2 phosphate + 2 H(+). In terms of biological role, canalicular ectonucleoside NTPDase responsible for the main hepatic NTPDase activity. Ectonucleoside ATPases catalyze the hydrolysis of gamma- and beta-phosphate residues of nucleotides, playing a central role in concentration of extracellular nucleotides. This chain is Ectonucleoside triphosphate diphosphohydrolase 8 (ENTPD8), found in Gallus gallus (Chicken).